Consider the following 306-residue polypeptide: ATP phosphoribosyltransferase (306 aa).

The protein belongs to the ATP phosphoribosyltransferase family.

The protein localises to the cytoplasm. The catalysed reaction is 1-(5-phospho-beta-D-ribosyl)-ATP + diphosphate = 5-phospho-alpha-D-ribose 1-diphosphate + ATP. It participates in amino-acid biosynthesis; L-histidine biosynthesis; L-histidine from 5-phospho-alpha-D-ribose 1-diphosphate: step 1/9. Catalyzes the condensation of ATP and 5-phosphoribose 1-diphosphate to form N'-(5'-phosphoribosyl)-ATP (PR-ATP). Has a crucial role in the pathway because the rate of histidine biosynthesis seems to be controlled primarily by regulation of the enzymatic activity. In Candida glabrata (strain ATCC 2001 / BCRC 20586 / JCM 3761 / NBRC 0622 / NRRL Y-65 / CBS 138) (Yeast), this protein is ATP phosphoribosyltransferase (HIS1).